A 494-amino-acid chain; its full sequence is Trigger factor (494 aa).

The 86-residue stretch at 169-254 (GDRITMDYVG…VKEVAAPADV (86 aa)) folds into the PPIase FKBP-type domain. Residues 441 to 494 (LAEEEGEAKAETKKAAPKKKAAAKAEAADAGEGEEAAPKKKAAPKKKAADESAE) are disordered.

This sequence belongs to the FKBP-type PPIase family. Tig subfamily.

Its subcellular location is the cytoplasm. The enzyme catalyses [protein]-peptidylproline (omega=180) = [protein]-peptidylproline (omega=0). In terms of biological role, involved in protein export. Acts as a chaperone by maintaining the newly synthesized protein in an open conformation. Functions as a peptidyl-prolyl cis-trans isomerase. The chain is Trigger factor from Rhizobium johnstonii (strain DSM 114642 / LMG 32736 / 3841) (Rhizobium leguminosarum bv. viciae).